We begin with the raw amino-acid sequence, 289 residues long: MATYNGECWIEEQLKSIIEQKDVDISIFISDDLSTDNTLNICEEFQLSYPSIINILPSVNKFGGAGKNFYRLIKDVDLENYDYICFSDQDDIWYKDKIKNAIDCLVFNNANCYSSNVIAYYPSGRKNLVDKAQSQTQFDYFFEAAGPGCTYVIKKETLIEFKKFIINNKNAAQDICLHDWFLYSFARTRNYSWYIDRKPTMLYRQHENNQVGANISFKAKYKRLGLVRNKWYRKEVTKIANALADDSFVNNQLGKGYIGNLILALSFWKLRRKKADKIYILLMLILNIF.

This sequence belongs to the glycosyltransferase 2 family.

Its pathway is bacterial outer membrane biogenesis; lipopolysaccharide biosynthesis. This Shigella flexneri protein is dTDP-rhamnosyl transferase RfbG (rfbG).